Here is a 3326-residue protein sequence, read N- to C-terminus: Protein unc-80 homolog (3326 aa).

The segment covering I152–S164 has biased composition (polar residues). Disordered stretches follow at residues I152–F178, K243–E267, P283–L317, and R450–R469. Position 257 is a phosphoserine (S257). Residues P283–R308 are compositionally biased toward polar residues. At S526 the chain carries Phosphoserine. 5 disordered regions span residues L536–E560, R697–P785, G967–I1076, E1405–P1430, and S1469–A1516. Basic and acidic residues-rich tracts occupy residues L551–E560 and K699–S713. Residues S723 to G737 show a composition bias toward low complexity. Residues A738–P770 are compositionally biased toward gly residues. Basic and acidic residues predominate over residues E772–N783. The segment covering S1038–E1055 has biased composition (low complexity). Basic and acidic residues predominate over residues I1418–V1429. A run of 2 helical transmembrane segments spans residues P2336–N2356 and I2466–L2486. Residues P2493–G2515 form a disordered region. 2 consecutive transmembrane segments (helical) span residues G2853–F2873 and L2899–L2919. The segment covering N3010–L3032 has biased composition (polar residues). Residues N3010–S3052 form a disordered region. S3110 is modified (phosphoserine). Disordered regions lie at residues L3122–S3222, P3236–P3271, and N3296–V3326. Positions G3127–R3136 are enriched in basic residues. Polar residues predominate over residues L3157–T3168. Residues T3298–F3309 show a composition bias toward polar residues. The segment covering G3315–V3326 has biased composition (acidic residues).

The protein belongs to the unc-80 family. As to quaternary structure, NALCN complex consists of NALCN and auxiliary subunits, UNC79, UNC80 and NACL1. These auxiliary subunits are essential for the NALCN complex function. Interacts (via N-terminus half) with NALCN; this interaction facilitates NALCN surface localization. Interacts (via C-terminus) with UNC79. UNC80 bridges NALCN to UNC79. Phosphorylated on tyrosine residues. Expressed almost exclusively in the brain. Expressed in hippocampus and ventral tegmental area neurons.

It is found in the cell membrane. The protein resides in the cell projection. Its subcellular location is the dendrite. In terms of biological role, auxiliary subunit of the NALCN sodium channel complex. The NALCN sodium channel complex is a voltage-gated ion channel responsible for the resting Na(+) permeability that controls neuronal excitability. This complex is activated by neuropeptides substance P, neurotensin. In addition, the channel is inhibited by extracellular Ca(2+) through the Ca(2+)-sensing receptor. UNC80 is essential for NALCN sensitivity to extracellular calcium. The chain is Protein unc-80 homolog (Unc80) from Mus musculus (Mouse).